The chain runs to 435 residues: MAKFRVVHYLNQFFGQIGGEEKADTAPLKKDGPVGPGTALNGAFKGEAEVVGTVICGDSYFAENMEEALKQILSMIKEYNPDLVVAGPAFNAGRYGTACGAVAEAVVKNLGIPAVTGMYPENPGVEMYKKSVYIIATADSAIGMRNAIPKMAALGLKLLKKEEIGTPEQEGYIARGIRKNYFAEERGAKRAVDMLIAKIKGENFTTELPMPAFDRVPPNPAIKDLSKATIALVTSGGIVPKGNPDRIESSSASKFGKYSIAGVKDLTSDTFETAHGGYDPVYANQDADRVLPVDVLREMEAEGKIGKLHDYYYATVGNGTSVANAAKFGQAIAADLKASGVDAVILTSTUGTCTRCGAAMVKEIERAGIPVVHMCTIVPISKTVGANRIVPTVAIPHPLGNPALPADEEKALRRKLVEKALKALTTEVEGQTVFD.

Sec350 is a catalytic residue. A non-standard amino acid (selenocysteine) is located at residue Sec350.

Belongs to the GrdB/GrdF/GrdH family. Heterohexamer of two alpha, two beta and two gamma subunits. Component of the glycine reductase complex, together with components A and C. PB is substrate specific.

It catalyses the reaction acetyl phosphate + [thioredoxin]-disulfide + NH4(+) + H2O = [thioredoxin]-dithiol + glycine + phosphate + H(+). In the first step of glycine reductase, the substrate is bound to component PB via a Schiff base intermediate. Then the PB-activated substrate is nucleophilically attacked by the selenol anion of component PA to transform it to a carboxymethylated selenoether and the respective amine. By action of component PC, acetyl phosphate is formed, leaving component PA in its oxidized state. Finally component PA becomes reduced by the thioredoxin system to start a new catalytic cycle of reductive deamination. The sequence is that of Glycine reductase complex component B subunit gamma (grdB) from Carboxydothermus hydrogenoformans (strain ATCC BAA-161 / DSM 6008 / Z-2901).